The chain runs to 297 residues: Cytidine deaminase (297 aa).

CMP/dCMP-type deaminase domains lie at Ser-54–Lys-174 and Leu-192–Val-297. Asn-95–Glu-97 serves as a coordination point for substrate. Residue His-108 coordinates Zn(2+). Glu-110 (proton donor) is an active-site residue. Positions 135 and 138 each coordinate Zn(2+).

This sequence belongs to the cytidine and deoxycytidylate deaminase family. In terms of assembly, homodimer. Zn(2+) serves as cofactor.

The enzyme catalyses cytidine + H2O + H(+) = uridine + NH4(+). It catalyses the reaction 2'-deoxycytidine + H2O + H(+) = 2'-deoxyuridine + NH4(+). In terms of biological role, this enzyme scavenges exogenous and endogenous cytidine and 2'-deoxycytidine for UMP synthesis. The chain is Cytidine deaminase from Actinobacillus pleuropneumoniae serotype 5b (strain L20).